The following is a 61-amino-acid chain: Metallothionein-1D (61 aa).

The beta stretch occupies residues 1 to 29 (MDPNCSCSTGGSCSCATSCTCKACRCTSC). Positions 5, 7, 13, 15, 19, 21, 24, 26, 29, 33, 34, 36, 37, 41, 44, 48, 50, 57, 59, and 60 each coordinate a divalent metal cation. An alpha region spans residues 30–61 (KKSCCSCCPAGCAKCAQGCICKGASDKCSCCA).

The protein belongs to the metallothionein superfamily. Type 1 family. Monomer.

In terms of biological role, metallothioneins have a high content of cysteine residues that bind various heavy metals; these proteins are transcriptionally regulated by both heavy metals and glucocorticoids. In Sus scrofa (Pig), this protein is Metallothionein-1D (MT1D).